The chain runs to 315 residues: 3-chlorobenzoate-3,4-dioxygenase reductase subunit (315 aa).

1-103 (MVAIDQHDTY…GATTRISAPR (103 aa)) contacts FMN. An FAD-binding FR-type domain is found at 7-109 (HDTYSVRVIS…SAPRNAFALD (103 aa)). Residues 228–315 (NEFTVNLARS…ALSPELTLDL (88 aa)) enclose the 2Fe-2S ferredoxin-type domain. Residues Cys264, Cys269, Cys272, and Cys302 each coordinate [2Fe-2S] cluster.

This sequence belongs to the PDR/VanB family. This dioxygenase system consists of two proteins: phthalate oxygenase and phthalate oxygenase reductase. The cofactor is FMN.

The sequence is that of 3-chlorobenzoate-3,4-dioxygenase reductase subunit (cbaB) from Comamonas testosteroni (Pseudomonas testosteroni).